A 1145-amino-acid polypeptide reads, in one-letter code: Protein sumv-2 (1145 aa).

A compositionally biased stretch (basic residues) spans 1-13 (MKPGRKSLPKKNR). Disordered stretches follow at residues 1–310 (MKPG…APPA), 429–464 (QSRTKLKGSSKEREETPAFDEESPIGGDEKRQQKAR), 999–1025 (HSASSSAAPSPVGASGRRATVTGAGSE), 1040–1059 (QIAAPSISGPPPPAPSPRTE), and 1073–1145 (ITTG…ISLI). Residues 14 to 34 (ASNITEKMPTTSTEAQSSSSK) show a composition bias toward polar residues. Basic and acidic residues-rich tracts occupy residues 73 to 104 (KTTEEVKSPRKSARKSELKKPEPEEKAKEPRK) and 216 to 225 (VPEKKPKIED). Residues 226 to 248 (APTTSSPKKSTPTSAPPTRASAR) show a composition bias toward low complexity. The segment covering 455-464 (GDEKRQQKAR) has biased composition (basic and acidic residues). Residues 999-1013 (HSASSSAAPSPVGAS) show a composition bias toward low complexity. Residues 1091 to 1102 (VIERGDFRDHRP) show a composition bias toward basic and acidic residues. Residues 1121-1136 (QQPPLPSPAPPPPRGP) are compositionally biased toward pro residues.

Influences the activity of genes involved in vulval development. The chain is Protein sumv-2 from Caenorhabditis elegans.